A 62-amino-acid chain; its full sequence is Ferredoxin-1 (62 aa).

4Fe-4S ferredoxin-type domains follow at residues 2 to 28 (ALYITEECTYCGACEPECPTNAISAGS) and 29 to 62 (EIYVIDAASCNECAGFADSPACVAVCPAECIVQG). Residues Cys-9, Cys-12, Cys-15, Cys-19, Cys-38, Cys-41, Cys-50, and Cys-54 each contribute to the [4Fe-4S] cluster site.

[4Fe-4S] cluster serves as cofactor.

Functionally, ferredoxins are iron-sulfur proteins that transfer electrons in a wide variety of metabolic reactions. The sequence is that of Ferredoxin-1 from Chlorobaculum tepidum (strain ATCC 49652 / DSM 12025 / NBRC 103806 / TLS) (Chlorobium tepidum).